Here is a 630-residue protein sequence, read N- to C-terminus: Pentatricopeptide repeat-containing protein At1g26460, mitochondrial (630 aa).

A mitochondrion-targeting transit peptide spans 1-115; the sequence is MASHLFTRSR…RALSETLDMN (115 aa). The disordered stretch occupies residues 42–79; sequence LLATESTDHDPSNHQSTSTPLPPNPATGSPLYQENWRS. The segment covering 67–77 has biased composition (polar residues); it reads ATGSPLYQENW. PPR repeat units lie at residues 154–189, 190–224, 227–261, 468–503, 504–538, and 539–573; these read DVNL…SVEP, NTAS…GKDS, DDES…GYML, SVAA…GLTP, NIDS…GVKP, and DSRT…GFEP.

It belongs to the PPR family. P subfamily.

The protein localises to the mitochondrion. The chain is Pentatricopeptide repeat-containing protein At1g26460, mitochondrial from Arabidopsis thaliana (Mouse-ear cress).